A 361-amino-acid chain; its full sequence is MDPLGAAKPQWPWRRCLAALLFQLLVAVCFFSYLRVSRDDATGSPRAPSGSSRQDTTPTRPTLLILLRTWPFHIPVALSRCSEMVPGTADCHITADRKVYPQADMVIVHHWDIMSNPKSRLPPSPRPQGQRWIWFNLEPPPNCQHLEALDRYFNLTMSYRSDSDIFTPYGWLEPWSGQPAHPPLNLSAKTELVAWAVSNWKPDSARVRYYQSLQAHLKVDVYGRSHKPLPKGTMMETLSRYKFYLAFENSLHPDYITEKLWRNALEAWAVPVVLGPSRSNYERFLPPDAFIHVDDFQSPKDLARYLQELDKDHARYLSYFRWRETLRPRSFSWALDFCKACWKLQQESRYQTVRSIAAWFT.

At Met-1 to Arg-15 the chain is on the cytoplasmic side. Residues Cys-16–Leu-34 form a helical; Signal-anchor for type II membrane protein membrane-spanning segment. Over Arg-35–Thr-361 the chain is Lumenal. The interval Asp-39–Pro-58 is disordered. 2 N-linked (GlcNAc...) asparagine glycosylation sites follow: Asn-154 and Asn-185.

Belongs to the glycosyltransferase 10 family. Glycosylated. In terms of tissue distribution, highly expressed in stomach, colon, small intestine, lung and kidney and to a lesser extent in salivary gland, bladder, uterus and liver.

The protein localises to the golgi apparatus. The protein resides in the golgi stack membrane. The enzyme catalyses a beta-D-galactosyl-(1-&gt;3)-N-acetyl-beta-D-glucosaminyl derivative + GDP-beta-L-fucose = a beta-D-galactosyl-(1-&gt;3)-[alpha-L-fucosyl-(1-&gt;4)]-N-acetyl-beta-D-glucosaminyl derivative + GDP + H(+). The catalysed reaction is an N-acetyl-alpha-neuraminyl-(2-&gt;3)-beta-D-galactosyl-(1-&gt;4)-N-acetyl-beta-D-glucosaminyl derivative + GDP-beta-L-fucose = an alpha-Neu5Ac-(2-&gt;3)-beta-D-Gal-(1-&gt;4)-[alpha-L-Fuc-(1-&gt;3)]-beta-D-GlcNAc derivative + GDP + H(+). It catalyses the reaction a beta-D-galactosyl-(1-&gt;4)-N-acetyl-beta-D-glucosaminyl derivative + GDP-beta-L-fucose = a beta-D-galactosyl-(1-&gt;4)-[alpha-L-fucosyl-(1-&gt;3)]-N-acetyl-beta-D-glucosaminyl derivative + GDP + H(+). It carries out the reaction an alpha-Neu5Ac-(2-&gt;3)-beta-D-Gal-(1-&gt;4)-beta-D-GlcNAc-(1-&gt;3)-beta-D-Gal-(1-&gt;4)-[alpha-L-Fuc-(1-&gt;3)]-beta-D-GlcNAc derivative + GDP-beta-L-fucose = an alpha-Neu5Ac-(2-&gt;3)-beta-D-Gal-(1-&gt;4)-[alpha-L-Fuc-(1-&gt;3)]-beta-D-GlcNAc-(1-&gt;3)-beta-D-Gal-(1-&gt;4)-[alpha-L-Fuc-(1-&gt;3)]-beta-D-GlcNAc derivative + GDP + H(+). The enzyme catalyses Lc4Cer + GDP-beta-L-fucose = a lactoside III(4)-a-Fuc-Lc4Cer + GDP + H(+). The catalysed reaction is a beta-D-Gal-(1-&gt;3)-beta-D-GlcNAc-(1-&gt;3)-beta-D-Gal-(1-&gt;4)-beta-D-Glc-(1&lt;-&gt;1')-Cer(d18:1(4E)) + GDP-beta-L-fucose = a III(4)-a-Fuc-Lc4Cer(d18:1(4E)) + GDP + H(+). It catalyses the reaction N-acetyl-alpha-neuraminosyl-(2-&gt;3)-beta-D-galactosyl-(1-&gt;3)-[N-acetyl-alpha-neuraminosyl-(2-&gt;6)]-N-acetyl-beta-D-glucosaminyl-(1-&gt;3)-beta-D-galactosyl-(1-&gt;4)-beta-D-glucosyl-(1&lt;-&gt;1')-N-acyl-sphing-4-enine + GDP-beta-L-fucose = N-acetyl-alpha-neuraminosyl-(2-&gt;3)-beta-D-galactosyl-(1-&gt;3)-alpha-L-fucosyl-(1-&gt;4)-[N-acetyl-alpha-neuraminosyl-(2-&gt;6)-N-acetyl-beta-D-glucosaminyl-(1-&gt;3)]-beta-D-galactosyl-(1-&gt;4)-beta-D-glucosyl-(1&lt;-&gt;1')-N-acyl-sphing-4-enine + GDP + H(+). It carries out the reaction N-acetyl-alpha-neuraminosyl-(2-&gt;3)-beta-D-galactosyl-(1-&gt;3)-N-acetyl-beta-D-glucosaminyl-(1-&gt;3)-beta-D-galactosyl-(1-&gt;4)-beta-D-glucosyl-(1&lt;-&gt;1')-N-acyl-sphing-4-enine + GDP-beta-L-fucose = N-acetyl-alpha-neuraminosyl-(2-&gt;3)-beta-D-galactosyl-(1-&gt;3)-alpha-L-fucosyl-(1-&gt;4)-[N-acetyl-beta-D-glucosaminyl-(1-&gt;3)]-beta-D-galactosyl-(1-&gt;4)-beta-D-glucosyl-(1&lt;-&gt;1')-N-acyl-sphing-4-enine + GDP + H(+). The enzyme catalyses beta-D-galactosyl-(1-&gt;3)-N-acetyl-D-glucosamine + GDP-beta-L-fucose = beta-D-galactosyl-(1-&gt;3)-[alpha-L-fucosyl-(1-&gt;4)]-N-acetyl-D-glucosamine + GDP + H(+). The catalysed reaction is alpha-L-Fuc-(1-&gt;2)-beta-D-Gal-(1-&gt;3)-D-GlcNAc + GDP-beta-L-fucose = alpha-L-Fuc-(1-&gt;2)-beta-D-Gal-(1-&gt;3)-[alpha-L-Fuc-(1-&gt;4)]-D-GlcNAc + GDP + H(+). It catalyses the reaction alpha-L-Fuc-(1-&gt;2)-beta-D-Gal-(1-&gt;4)-D-GlcNAc + GDP-beta-L-fucose = alpha-L-Fuc-(1-&gt;2)-beta-D-Gal-(1-&gt;4)-[alpha-L-Fuc-(1-&gt;3)]-D-GlcNAc + GDP + H(+). It carries out the reaction beta-D-galactosyl-(1-&gt;4)-N-acetyl-D-glucosamine + GDP-beta-L-fucose = beta-D-galactosyl-(1-&gt;4)-[alpha-L-fucosyl-(1-&gt;3)]-N-acetyl-D-glucosamine + GDP + H(+). The enzyme catalyses lactose + GDP-beta-L-fucose = beta-D-galactosyl-(1-&gt;4)-[alpha-L-fucosyl-(1-&gt;3)]-D-glucose + GDP + H(+). The catalysed reaction is an alpha-Neu5Ac-(2-&gt;3)-beta-D-Gal-(1-&gt;3)-D-GlcNAc derivative + GDP-beta-L-fucose = an alpha-Neu5Ac-(2-&gt;3)-beta-D-Gal-(1-&gt;3)-[alpha-L-Fuc-(1-&gt;4)]-beta-D-GlcNAc derivative + GDP + H(+). The protein operates within protein modification; protein glycosylation. Catalyzes the transfer of L-fucose, from a guanosine diphosphate-beta-L-fucose, to both the subterminal N-acetyl glucosamine (GlcNAc) of type 1 chain (beta-D-Gal-(1-&gt;3)-beta-D-GlcNAc) glycolipids and oligosaccharides via an alpha(1,4) linkage, and the subterminal glucose (Glc) or GlcNAc of type 2 chain (beta-D-Gal-(1-&gt;4)-beta-D-GlcNAc) oligosaccharides via an alpha(1,3) linkage, independently of the presence of terminal alpha-L-fucosyl-(1,2) moieties on the terminal galactose of these acceptors. Through its catalytic activity, participates in the synthesis of antigens of the Lewis blood group system, i.e. Lewis a (Le(a)), lewis b (Le(b)), Lewis x/SSEA-1 (Le(x)) and lewis y (Le(y)) antigens. Also catalyzes the transfer of L-fucose to subterminal GlcNAc of sialyl- and disialyl-lactotetraosylceramide to produce sialyl Lewis a (sLe(a)) and disialyl Lewis a via an alpha(1,4) linkage and therefore may regulate cell surface sLe(a) expression and consequently regulates adhesive properties to E-selectin, cell proliferation and migration. Catalyzes the transfer of an L-fucose to 3'-sialyl-N-acetyllactosamine by an alpha(1,3) linkage, which allows the formation of sialyl-Lewis x structure and therefore may regulate the sialyl-Lewis x surface antigen expression and consequently adhesive properties to E-selectin. Prefers type 1 chain over type 2 acceptors. Type 1 tetrasaccharide is a better acceptor than type 1 disaccharide suggesting that a beta anomeric configuration of GlcNAc in the substrate is preferred. Lewis-positive (Le(+)) individuals have an active enzyme while Lewis-negative (Le(-)) individuals have an inactive enzyme. The sequence is that of 3-galactosyl-N-acetylglucosaminide 4-alpha-L-fucosyltransferase FUT3 from Homo sapiens (Human).